The sequence spans 139 residues: Hydrogenase maturation factor HypA (139 aa).

His2 is a binding site for Ni(2+). Positions 73, 76, 110, and 113 each coordinate Zn(2+).

Belongs to the HypA/HybF family.

Functionally, involved in the maturation of [NiFe] hydrogenases. Required for nickel insertion into the metal center of the hydrogenase. The polypeptide is Hydrogenase maturation factor HypA (Thermococcus gammatolerans (strain DSM 15229 / JCM 11827 / EJ3)).